Reading from the N-terminus, the 220-residue chain is MSLPLPSHMKSVFLGMKVEISTSVPVTRIGFWRKSVDCKESRIGKQPITVPANVAIAMEGQDLKVKGPLGELSITYPREVLVEKQESGFLRVRKAVETRRANQMHGLFRTLTDNMVVGVSKGFEKKLQLVGVGYRATVEGKDLILSLGFSHPVRMAIPDELQVKVEENTKVTVSGRDKSVVGQFAATIRSWRPPEPYKGKGVRYVDEVVRRKEGKAGKKK.

Residues 1 to 38 (MSLPLPSHMKSVFLGMKVEISTSVPVTRIGFWRKSVDC) constitute a chloroplast transit peptide.

As to quaternary structure, component of the chloroplast large ribosomal subunit (LSU). Mature 70S chloroplast ribosomes of higher plants consist of a small (30S) and a large (50S) subunit. The 30S small subunit contains 1 molecule of ribosomal RNA (16S rRNA) and 24 different proteins. The 50S large subunit contains 3 rRNA molecules (23S, 5S and 4.5S rRNA) and 33 different proteins.

The protein localises to the plastid. It is found in the chloroplast. Its function is as follows. Component of the chloroplast ribosome (chloro-ribosome), a dedicated translation machinery responsible for the synthesis of chloroplast genome-encoded proteins, including proteins of the transcription and translation machinery and components of the photosynthetic apparatus. This is Large ribosomal subunit protein uL6c (RPL6) from Spinacia oleracea (Spinach).